Here is a 363-residue protein sequence, read N- to C-terminus: 3-methyl-D-ornithine--L-lysine ligase (363 aa).

Residue Lys-10 coordinates ATP. 11-12 provides a ligand contact to L-lysine; the sequence is LQ. ATP contacts are provided by residues Asp-31, 49–50, and 72–73; these read DV and EN. L-lysine is bound at residue Glu-72. Positions 85–269 constitute an ATP-grasp domain; sequence EEFSCPVLFD…LIELLFRAFG (185 aa). ADP is bound by residues Lys-104, Lys-131, Ser-138, and 160–163; that span reads EEYV. D-ornithine contacts are provided by residues 169-171 and Asp-225; that span reads SLE. Mg(2+) contacts are provided by Glu-227, Glu-239, and Asp-241. Position 239 (Glu-239) interacts with ADP. Residues 243–248 and Glu-302 contribute to the D-ornithine site; that span reads RFPSQT. L-lysine-binding residues include Ser-246 and Glu-302.

It belongs to the PylC family. Requires Mg(2+) as cofactor.

It carries out the reaction (3R)-3-methyl-D-ornithine + L-lysine + ATP = (3R)-3-methyl-D-ornithyl-N(6)-L-lysine + ADP + phosphate + H(+). It participates in amino-acid biosynthesis; L-pyrrolysine biosynthesis. Functionally, is required for the biosynthesis of pyrrolysine. Catalyzes the ATP-dependent ligation between (3R)-3-methyl-D-ornithine and L-lysine, leading to (3R)-3-methyl-D-ornithyl-N6-L-lysine. The protein is 3-methyl-D-ornithine--L-lysine ligase of Methanosarcina acetivorans (strain ATCC 35395 / DSM 2834 / JCM 12185 / C2A).